The following is a 154-amino-acid chain: Ribonuclease 8 (154 aa).

Positions 1–27 (MAPARAGCCPLLLLLLGLWVAQIPVSA) are cleaved as a signal peptide. The active-site Proton acceptor is the H42. Cystine bridges form between C64–C118 and C89–C96. Residues 65-69 (KDLNT) and K90 contribute to the substrate site. The Proton donor role is filled by H149.

This sequence belongs to the pancreatic ribonuclease family.

Its subcellular location is the secreted. Its function is as follows. Has a low ribonuclease activity. In Chlorocebus aethiops (Green monkey), this protein is Ribonuclease 8 (RNASE8).